We begin with the raw amino-acid sequence, 215 residues long: Venom allergen 5.02 (215 aa).

Positions proline 1–alanine 10 are cleaved as a signal peptide. Disulfide bonds link cysteine 14-cysteine 26, cysteine 18-cysteine 111, cysteine 36-cysteine 104, and cysteine 181-cysteine 198. One can recognise an SCP domain in the interval valine 55 to tyrosine 200.

It belongs to the CRISP family. Venom allergen 5-like subfamily. As to expression, expressed by the venom gland.

It is found in the secreted. In Dolichovespula maculata (Bald-faced hornet), this protein is Venom allergen 5.02.